The primary structure comprises 872 residues: Protein translocase subunit SecA (872 aa).

ATP is bound by residues Q87, 105 to 109, and D500; that span reads GEGKT. Positions 855, 857, 866, and 867 each coordinate Zn(2+).

The protein belongs to the SecA family. As to quaternary structure, monomer and homodimer. Part of the essential Sec protein translocation apparatus which comprises SecA, SecYEG and auxiliary proteins SecDF-YajC and YidC. The cofactor is Zn(2+).

The protein localises to the cell inner membrane. Its subcellular location is the cytoplasm. It catalyses the reaction ATP + H2O + cellular proteinSide 1 = ADP + phosphate + cellular proteinSide 2.. Its function is as follows. Part of the Sec protein translocase complex. Interacts with the SecYEG preprotein conducting channel. Has a central role in coupling the hydrolysis of ATP to the transfer of proteins into and across the cell membrane, serving both as a receptor for the preprotein-SecB complex and as an ATP-driven molecular motor driving the stepwise translocation of polypeptide chains across the membrane. This is Protein translocase subunit SecA from Anaplasma marginale (strain St. Maries).